The primary structure comprises 229 residues: Heptaprenylglyceryl phosphate synthase (229 aa).

Lys12 serves as a coordination point for sn-glycerol 1-phosphate. The Mg(2+) site is built by Asp14 and Ser40. Sn-glycerol 1-phosphate-binding positions include 159-164, Gly189, and 209-210; these read YLEYSG and GN.

This sequence belongs to the GGGP/HepGP synthase family. Group I subfamily. Homodimer. The cofactor is Mg(2+).

The catalysed reaction is sn-glycerol 1-phosphate + all-trans-heptaprenyl diphosphate = 3-heptaprenyl-sn-glycero-1-phosphate + diphosphate. It participates in membrane lipid metabolism; glycerophospholipid metabolism. Functionally, prenyltransferase that catalyzes in vivo the transfer of the heptaprenyl moiety of heptaprenyl pyrophosphate (HepPP; 35 carbon atoms) to the C3 hydroxyl of sn-glycerol-1-phosphate (G1P), producing heptaprenylglyceryl phosphate (HepGP). This reaction is an ether-bond-formation step in the biosynthesis of archaea-type G1P-based membrane lipids found in Bacillales. The chain is Heptaprenylglyceryl phosphate synthase from Bacillus cereus (strain ATCC 10987 / NRS 248).